Reading from the N-terminus, the 250-residue chain is NAD(P)H-quinone oxidoreductase subunit S, chloroplastic (250 aa).

The N-terminal 48 residues, 1-48, are a transit peptide targeting the chloroplast; that stretch reads MATSSITIPTIRTPIHRSKFLGQTHQFSTVNRSVFPPPKQQSKLYQVK. Residue K52 forms a Glycyl lysine isopeptide (Lys-Gly) (interchain with G-Cter in ubiquitin) linkage. Composition is skewed to basic and acidic residues over residues 76–94 and 106–115; these read QRNI…NETE and VPEDGFEKEM. Disordered stretches follow at residues 76–163 and 222–250; these read QRNI…KPKA and REKG…EAAP. Over residues 136 to 146 the composition is skewed to pro residues; the sequence is NPPPPPPPPPA.

In terms of assembly, part of the chloroplast NDH complex, composed of a mixture of chloroplast and nucleus encoded subunits. Component of the electron donor-binding subcomplex, at least composed of NDHS, NDHT and NDHU. Interacts with the NDH subcomplex A via the protein NDHT and NDHU. Post-translationally, arg-193 is the critical site for the high affinity binding of NDH to ferredoxin.

Its subcellular location is the plastid. The protein localises to the chloroplast thylakoid membrane. It carries out the reaction a plastoquinone + NADH + (n+1) H(+)(in) = a plastoquinol + NAD(+) + n H(+)(out). The enzyme catalyses a plastoquinone + NADPH + (n+1) H(+)(in) = a plastoquinol + NADP(+) + n H(+)(out). NDH shuttles electrons from NAD(P)H:plastoquinone, via FMN and iron-sulfur (Fe-S) centers, to quinones in the photosynthetic chain and possibly in a chloroplast respiratory chain. The immediate electron acceptor for the enzyme in this species is believed to be plastoquinone. Couples the redox reaction to proton translocation, and thus conserves the redox energy in a proton gradient. Required for the efficient operation of ferredoxin-dependent plastoquinone reduction. Forms the electron donor-binding subcomplex in association with the NDHT and NDHU subunits. The chain is NAD(P)H-quinone oxidoreductase subunit S, chloroplastic from Arabidopsis thaliana (Mouse-ear cress).